We begin with the raw amino-acid sequence, 188 residues long: Archaemetzincin (188 aa).

Histidine 137 is a binding site for Zn(2+). The active-site Proton acceptor is the glutamate 138. The Zn(2+) site is built by histidine 141, histidine 147, cysteine 148, cysteine 153, cysteine 172, and cysteine 175.

Belongs to the peptidase M54 family. As to quaternary structure, monomer. It depends on Zn(2+) as a cofactor.

Functionally, probable zinc metalloprotease whose natural substrate is unknown. In Pyrococcus horikoshii (strain ATCC 700860 / DSM 12428 / JCM 9974 / NBRC 100139 / OT-3), this protein is Archaemetzincin.